We begin with the raw amino-acid sequence, 149 residues long: Arginine repressor (149 aa).

It belongs to the ArgR family.

Its subcellular location is the cytoplasm. The protein operates within amino-acid biosynthesis; L-arginine biosynthesis [regulation]. In terms of biological role, regulates arginine biosynthesis genes. The chain is Arginine repressor from Geobacillus kaustophilus (strain HTA426).